The chain runs to 375 residues: Chaperone protein DnaJ (375 aa).

Residues 5 to 69 (DYYEILGIDK…QKRAQYDQFG (65 aa)) enclose the J domain. The CR-type zinc-finger motif lies at 131-213 (GKETDIEIPK…CGGSGTVQKN (83 aa)). Residues Cys144, Cys147, Cys161, Cys164, Cys187, Cys190, Cys201, and Cys204 each contribute to the Zn(2+) site. CXXCXGXG motif repeat units lie at residues 144–151 (CDTCNGSG), 161–168 (CSHCHGSG), 187–194 (CNYCQGTG), and 201–208 (CNTCGGSG).

The protein belongs to the DnaJ family. Homodimer. Zn(2+) is required as a cofactor.

The protein localises to the cytoplasm. Participates actively in the response to hyperosmotic and heat shock by preventing the aggregation of stress-denatured proteins and by disaggregating proteins, also in an autonomous, DnaK-independent fashion. Unfolded proteins bind initially to DnaJ; upon interaction with the DnaJ-bound protein, DnaK hydrolyzes its bound ATP, resulting in the formation of a stable complex. GrpE releases ADP from DnaK; ATP binding to DnaK triggers the release of the substrate protein, thus completing the reaction cycle. Several rounds of ATP-dependent interactions between DnaJ, DnaK and GrpE are required for fully efficient folding. Also involved, together with DnaK and GrpE, in the DNA replication of plasmids through activation of initiation proteins. The sequence is that of Chaperone protein DnaJ from Oceanobacillus iheyensis (strain DSM 14371 / CIP 107618 / JCM 11309 / KCTC 3954 / HTE831).